A 634-amino-acid polypeptide reads, in one-letter code: Frizzled and smoothened-like protein D (634 aa).

Residues methionine 1–cysteine 21 form the signal peptide. Topologically, residues glutamine 22 to lysine 257 are extracellular. Residues aspartate 34–glycine 178 enclose the FZ domain. Asparagine 126, asparagine 168, asparagine 215, asparagine 243, and asparagine 254 each carry an N-linked (GlcNAc...) asparagine glycan. The helical transmembrane segment at alanine 258 to isoleucine 278 threads the bilayer. The Cytoplasmic portion of the chain corresponds to lysine 279–cysteine 287. Residues isoleucine 288 to valine 308 form a helical membrane-spanning segment. Over glycine 309–serine 335 the chain is Extracellular. A helical transmembrane segment spans residues isoleucine 336–tyrosine 356. The Cytoplasmic portion of the chain corresponds to serine 357–arginine 368. A helical membrane pass occupies residues tyrosine 369–lysine 389. Residues lysine 390 to alanine 410 are Extracellular-facing. Residues isoleucine 411–isoleucine 431 form a helical membrane-spanning segment. At phenylalanine 432–lysine 454 the chain is on the cytoplasmic side. A helical transmembrane segment spans residues proline 455–aspartate 475. Residues serine 476–serine 513 lie on the Extracellular side of the membrane. A helical membrane pass occupies residues tyrosine 514–threonine 534. At serine 535–isoleucine 634 the chain is on the cytoplasmic side. The interval valine 560–lysine 624 is disordered. Composition is skewed to low complexity over residues serine 572–threonine 592 and aspartate 609–asparagine 622.

Belongs to the G-protein coupled receptor Fz/Smo family.

Its subcellular location is the membrane. The sequence is that of Frizzled and smoothened-like protein D (fslD) from Dictyostelium discoideum (Social amoeba).